We begin with the raw amino-acid sequence, 349 residues long: tRNA pseudouridine synthase D (349 aa).

Residue Phe27 coordinates substrate. Asp80 serves as the catalytic Nucleophile. Asn129 lines the substrate pocket. A TRUD domain is found at 155–303; sequence GVPNYFGAQR…VEAARRAMLL (149 aa). Phe329 is a substrate binding site.

This sequence belongs to the pseudouridine synthase TruD family.

It carries out the reaction uridine(13) in tRNA = pseudouridine(13) in tRNA. Functionally, responsible for synthesis of pseudouridine from uracil-13 in transfer RNAs. This Escherichia coli (strain K12 / MC4100 / BW2952) protein is tRNA pseudouridine synthase D.